A 298-amino-acid chain; its full sequence is Cobalt-precorrin-5B C(1)-methyltransferase (298 aa).

It belongs to the CbiD family.

It catalyses the reaction Co-precorrin-5B + S-adenosyl-L-methionine = Co-precorrin-6A + S-adenosyl-L-homocysteine. The protein operates within cofactor biosynthesis; adenosylcobalamin biosynthesis; cob(II)yrinate a,c-diamide from sirohydrochlorin (anaerobic route): step 6/10. Catalyzes the methylation of C-1 in cobalt-precorrin-5B to form cobalt-precorrin-6A. This is Cobalt-precorrin-5B C(1)-methyltransferase from Archaeoglobus fulgidus (strain ATCC 49558 / DSM 4304 / JCM 9628 / NBRC 100126 / VC-16).